The primary structure comprises 265 residues: MALQIPSLLLSAAVVVLMVLSSPGTEGGDSERHFVYQFMGECYFTNGTQRIRYVTRYIYNREEYVRYDSDVGEHRAVTELGRPDAEYWNSQPEILERTRAELDTVCRHNYEGPETHTSLRRLEQPNVVISLSRTEALNHHNTLVCSVTDFYPAKIKVRWFRNGQEETVGVSSTQLIRNGDWTFQVLVMLEMTPRRGEVYTCHVEHPSLKSPITVEWRAQSESAWSKMLSGIGGCVLGVIFLGLGLFIRHRSQKGPRGPPPAGLLQ.

Residues Met1–Gly27 form the signal peptide. A beta-1 region spans residues Gly28–Leu122. Residues Gly28–Lys226 lie on the Extracellular side of the membrane. Disulfide bonds link Cys42–Cys106 and Cys145–Cys201. N-linked (GlcNAc...) asparagine glycosylation is present at Asn46. Positions Glu123–Trp216 are beta-2. Positions Pro125–Thr213 constitute an Ig-like C1-type domain. Positions Arg217–Lys226 are connecting peptide. A helical membrane pass occupies residues Met227–Ile247. Topologically, residues Arg248–Gln265 are cytoplasmic.

This sequence belongs to the MHC class II family. In terms of processing, ubiquitinated in immature dendritic cells leading to down-regulation of MHC class II.

It localises to the membrane. This is H-2 class II histocompatibility antigen, A beta chain (H2-Ab1) from Mus musculus (Mouse).